Reading from the N-terminus, the 705-residue chain is Forkhead box protein P1 (705 aa).

Polar residues predominate over residues 1 to 19 (MMQESGSETKSNGSAIQNG). Residues 1–41 (MMQESGSETKSNGSAIQNGSSGGNHLLECGALRDTRSNGEA) are disordered. Ser113 is modified (phosphoserine). Disordered stretches follow at residues 267-286 (HTAE…TSTC) and 291-326 (APSK…EHPH). Composition is skewed to polar residues over residues 276-286 (NHSSLDLTSTC) and 291-311 (APSK…QLSV). Over residues 314–326 (PKRESLSHEEHPH) the composition is skewed to basic and acidic residues. Residue Lys315 forms a Glycyl lysine isopeptide (Lys-Gly) (interchain with G-Cter in SUMO2) linkage. The C2H2-type zinc finger occupies 334–359 (GVCKWPGCEAVCDDFPAFLKHLNSEH). The tract at residues 376–397 (VQQLELQLAKDKERLQAMMTHL) is leucine-zipper. Glycyl lysine isopeptide (Lys-Gly) (interchain with G-Cter in SUMO2) cross-links involve residues Lys400 and Lys405. The CTBP1-binding stretch occupies residues 410–414 (PLNLV). Polar residues predominate over residues 418 to 431 (TLSKSASEASPQSL). The tract at residues 418–450 (TLSKSASEASPQSLPHTPTTPTAPLTPVTQGPS) is disordered. A compositionally biased stretch (low complexity) spans 432–446 (PHTPTTPTAPLTPVT). Residue Lys470 forms a Glycyl lysine isopeptide (Lys-Gly) (interchain with G-Cter in SUMO2) linkage. The segment at residues 493–583 (RPPFTYASLI…PQKISGNPSL (91 aa)) is a DNA-binding region (fork-head). The tract at residues 639 to 705 (EHTNSNESDS…EDEPVNEDME (67 aa)) is disordered. Polar residues predominate over residues 640-651 (HTNSNESDSSPG). Thr681 carries the phosphothreonine modification. Residue Ser686 is modified to Phosphoserine. Over residues 695–705 (YEDEPVNEDME) the composition is skewed to acidic residues.

Forms homodimers and heterodimers with FOXP2 and FOXP4. Dimerization is required for DNA-binding. Self-associates. Interacts with CTBP1. Interacts with NCOR2 and AR. Interacts with FOXP2. Interacts with TBR1. Interacts with AURKA; this interaction facilitates the phosphorylation of FOXP1, which suppresses the expression of FBXL7. Interacts with ZMYM2. Isoform 5 is specifically expressed in embryonic stem cells. Highest expression in the lung, brain, and spleen. Lower expression in heart, skeletal muscle, kidney, small intestine (isoform 3 not present) and liver.

Its subcellular location is the nucleus. In terms of biological role, transcriptional repressor. Can act with CTBP1 to synergistically repress transcription but CTPBP1 is not essential. Plays an important role in the specification and differentiation of lung epithelium. Acts cooperatively with FOXP4 to regulate lung secretory epithelial cell fate and regeneration by restricting the goblet cell lineage program; the function may involve regulation of AGR2. Essential transcriptional regulator of B-cell development. Involved in regulation of cardiac muscle cell proliferation. Involved in the columnar organization of spinal motor neurons. Promotes the formation of the lateral motor neuron column (LMC) and the preganglionic motor column (PGC) and is required for respective appropriate motor axon projections. The segment-appropriate generation of spinal cord motor columns requires cooperation with other Hox proteins. Can regulate PITX3 promoter activity; may promote midbrain identity in embryonic stem cell-derived dopamine neurons by regulating PITX3. Negatively regulates the differentiation of T follicular helper cells T(FH)s. Involved in maintenance of hair follicle stem cell quiescence; the function probably involves regulation of FGF18. Represses transcription of various pro-apoptotic genes and cooperates with NF-kappa B-signaling in promoting B-cell expansion by inhibition of caspase-dependent apoptosis. Binds to CSF1R promoter elements and is involved in regulation of monocyte differentiation and macrophage functions; repression of CSF1R in monocytes seems to involve NCOR2 as corepressor. Involved in endothelial cell proliferation, tube formation and migration indicative for a role in angiogenesis; the role in neovascularization seems to implicate suppression of SEMA5B. Can negatively regulate androgen receptor signaling. Acts as a transcriptional activator of the FBXL7 promoter; this activity is regulated by AURKA. Functionally, involved in transcriptional regulation in embryonic stem cells (ESCs). Stimulates expression of transcription factors that are required for pluripotency and decreases expression of differentiation-associated genes. Has distinct DNA-binding specifities as compared to the canonical form and preferentially binds DNA with the sequence 5'-CGATACAA-3' (or closely related sequences). Promotes ESC self-renewal and pluripotency. The sequence is that of Forkhead box protein P1 (Foxp1) from Mus musculus (Mouse).